The chain runs to 197 residues: MHVAVFGGTFDPPHNGHLAMCLLARELLHIDKVILSISNNPFKLLRSDHDDHRKNMVGLLASELKKTELPAEVSGWELQKKTPSYTVELLRFLRTEYPDVQLTLLVGEDSYREFPLWKSYEELVLLCRIAVFRRVPPEQIAHREQRLEMIGNVRFIDFDCPISSTTIRADIASGRPVTAKIPSAINRYIIDHRLYRD.

It belongs to the NadD family.

The catalysed reaction is nicotinate beta-D-ribonucleotide + ATP + H(+) = deamido-NAD(+) + diphosphate. It functions in the pathway cofactor biosynthesis; NAD(+) biosynthesis; deamido-NAD(+) from nicotinate D-ribonucleotide: step 1/1. Functionally, catalyzes the reversible adenylation of nicotinate mononucleotide (NaMN) to nicotinic acid adenine dinucleotide (NaAD). The polypeptide is Probable nicotinate-nucleotide adenylyltransferase (Chlorobium phaeobacteroides (strain DSM 266 / SMG 266 / 2430)).